A 273-amino-acid polypeptide reads, in one-letter code: Glutamate racemase (273 aa).

Residues 9–10 and 41–42 contribute to the substrate site; these read DS and YG. The active-site Proton donor/acceptor is cysteine 73. A substrate-binding site is contributed by 74–75; that stretch reads NT. Cysteine 183 functions as the Proton donor/acceptor in the catalytic mechanism. A substrate-binding site is contributed by 184–185; sequence TH.

Belongs to the aspartate/glutamate racemases family.

It catalyses the reaction L-glutamate = D-glutamate. It functions in the pathway cell wall biogenesis; peptidoglycan biosynthesis. In terms of biological role, provides the (R)-glutamate required for cell wall biosynthesis. The sequence is that of Glutamate racemase from Shewanella oneidensis (strain ATCC 700550 / JCM 31522 / CIP 106686 / LMG 19005 / NCIMB 14063 / MR-1).